Consider the following 91-residue polypeptide: Small ribosomal subunit protein uS19 (91 aa).

The protein belongs to the universal ribosomal protein uS19 family.

Functionally, protein S19 forms a complex with S13 that binds strongly to the 16S ribosomal RNA. The chain is Small ribosomal subunit protein uS19 from Paraburkholderia phymatum (strain DSM 17167 / CIP 108236 / LMG 21445 / STM815) (Burkholderia phymatum).